The sequence spans 714 residues: Developmentally-regulated protein kinase 1 (714 aa).

2 disordered regions span residues 88–122 (NNNI…NNFN) and 174–266 (CNMI…IINN). 3 stretches are compositionally biased toward low complexity: residues 174-200 (CNMI…NNNN), 209-227 (PSSN…TTSS), and 240-266 (NFNQ…IINN). Positions 334 to 589 (FNFYGSLGSG…SCSIRNHKWF (256 aa)) constitute a Protein kinase domain. Residues 340-348 (LGSGSFGTA) and Lys363 contribute to the ATP site. The active-site Proton acceptor is the Asp457. The residue at position 488 (Thr488) is a Phosphothreonine.

This sequence belongs to the protein kinase superfamily. AGC Ser/Thr protein kinase family.

It catalyses the reaction L-seryl-[protein] + ATP = O-phospho-L-seryl-[protein] + ADP + H(+). The enzyme catalyses L-threonyl-[protein] + ATP = O-phospho-L-threonyl-[protein] + ADP + H(+). In Dictyostelium discoideum (Social amoeba), this protein is Developmentally-regulated protein kinase 1 (pkaD).